The following is a 301-amino-acid chain: Ribosomal RNA small subunit methyltransferase H (301 aa).

S-adenosyl-L-methionine is bound by residues 25–27, Asp-45, Phe-72, Asp-94, and Gln-101; that span reads GGH.

This sequence belongs to the methyltransferase superfamily. RsmH family.

Its subcellular location is the cytoplasm. It catalyses the reaction cytidine(1402) in 16S rRNA + S-adenosyl-L-methionine = N(4)-methylcytidine(1402) in 16S rRNA + S-adenosyl-L-homocysteine + H(+). Its function is as follows. Specifically methylates the N4 position of cytidine in position 1402 (C1402) of 16S rRNA. This chain is Ribosomal RNA small subunit methyltransferase H, found in Methylococcus capsulatus (strain ATCC 33009 / NCIMB 11132 / Bath).